The primary structure comprises 247 residues: Uridylate kinase (247 aa).

Residue Lys15–Gly18 coordinates ATP. An involved in allosteric activation by GTP region spans residues Gly23–Gly28. UMP is bound at residue Gly57. The ATP site is built by Gly58 and Arg62. Residues Asp77 and Thr138–Thr145 contribute to the UMP site. ATP contacts are provided by Thr165, Tyr171, and Asp174.

Belongs to the UMP kinase family. As to quaternary structure, homohexamer.

The protein resides in the cytoplasm. It catalyses the reaction UMP + ATP = UDP + ADP. It functions in the pathway pyrimidine metabolism; CTP biosynthesis via de novo pathway; UDP from UMP (UMPK route): step 1/1. With respect to regulation, allosterically activated by GTP. Inhibited by UTP. In terms of biological role, catalyzes the reversible phosphorylation of UMP to UDP. The protein is Uridylate kinase of Colwellia psychrerythraea (strain 34H / ATCC BAA-681) (Vibrio psychroerythus).